The chain runs to 550 residues: Hydroxylamine reductase (550 aa).

Residues Cys-5, Cys-8, Cys-17, and Cys-23 each contribute to the [4Fe-4S] cluster site. Residues His-250, Glu-274, Cys-319, Cys-405, Cys-433, Cys-458, Glu-492, and Lys-494 each contribute to the hybrid [4Fe-2O-2S] cluster site. A Cysteine persulfide modification is found at Cys-405.

It belongs to the HCP family. The cofactor is [4Fe-4S] cluster. Requires hybrid [4Fe-2O-2S] cluster as cofactor.

The protein localises to the cytoplasm. It catalyses the reaction A + NH4(+) + H2O = hydroxylamine + AH2 + H(+). Functionally, catalyzes the reduction of hydroxylamine to form NH(3) and H(2)O. This chain is Hydroxylamine reductase, found in Geobacter sulfurreducens (strain ATCC 51573 / DSM 12127 / PCA).